The primary structure comprises 338 residues: Oligopeptide transport ATP-binding protein OppD (338 aa).

The region spanning 7-257 (LEAKQVSVAF…PKHPYTRSLL (251 aa)) is the ABC transporter domain. 43–50 (GESGSGKS) contacts ATP.

Belongs to the ABC transporter superfamily. The complex is composed of two ATP-binding proteins (OppD and OppF), two transmembrane proteins (OppB and OppC) and a solute-binding protein (OppA).

It is found in the cell membrane. The enzyme catalyses a [peptide](out) + ATP + H2O = a [peptide](in) + ADP + phosphate + H(+). Functionally, part of the ABC transporter complex OppABCDF involved in the uptake of oligopeptides. Probably responsible for energy coupling to the transport system. Essential for uptake of peptides larger than three amino acids and for growth in milk. This Lactococcus lactis subsp. cremoris (strain SK11) protein is Oligopeptide transport ATP-binding protein OppD.